Reading from the N-terminus, the 211-residue chain is ATP phosphoribosyltransferase (211 aa).

Belongs to the ATP phosphoribosyltransferase family. Short subfamily. Heteromultimer composed of HisG and HisZ subunits.

Its subcellular location is the cytoplasm. The enzyme catalyses 1-(5-phospho-beta-D-ribosyl)-ATP + diphosphate = 5-phospho-alpha-D-ribose 1-diphosphate + ATP. It functions in the pathway amino-acid biosynthesis; L-histidine biosynthesis; L-histidine from 5-phospho-alpha-D-ribose 1-diphosphate: step 1/9. Its function is as follows. Catalyzes the condensation of ATP and 5-phosphoribose 1-diphosphate to form N'-(5'-phosphoribosyl)-ATP (PR-ATP). Has a crucial role in the pathway because the rate of histidine biosynthesis seems to be controlled primarily by regulation of HisG enzymatic activity. In Lacticaseibacillus casei (strain BL23) (Lactobacillus casei), this protein is ATP phosphoribosyltransferase.